A 456-amino-acid polypeptide reads, in one-letter code: Histidinol dehydrogenase homolog (456 aa).

Residue His279 coordinates Zn(2+). Active-site proton acceptor residues include Glu347 and His348. Position 440 (His440) interacts with Zn(2+).

This sequence belongs to the histidinol dehydrogenase family. The cofactor is Zn(2+).

In Rhizobium meliloti (strain 1021) (Ensifer meliloti), this protein is Histidinol dehydrogenase homolog.